The sequence spans 681 residues: Angiomotin-like 2b (681 aa).

A compositionally biased stretch (low complexity) spans 68–84 (GGGAASSSQSSSESLSQ). The segment at 68–106 (GGGAASSSQSSSESLSQDEPHSPQLSTRQEPQGQEHQVD) is disordered. The span at 90-102 (PQLSTRQEPQGQE) shows a compositional bias: polar residues. A Phosphotyrosine; by FGFR1 modification is found at tyrosine 126. Coiled-coil stretches lie at residues 268–319 (NACS…LMKG), 362–441 (IEKL…LQAT), and 481–508 (VYTL…WEQK). Residues 589-618 (QLGALQPATADSSIISSHSTPAHTAQGKER) are disordered. The segment covering 597–611 (TADSSIISSHSTPAH) has biased composition (polar residues). Positions 678-681 (EIFI) match the PDZ-binding motif.

It belongs to the angiomotin family. Interacts with SRC. Phosphorylation at Tyr-126 is necessary for efficient binding to SRC and synergistically functioning with SRC to activate the downstream MAPK pathway. In terms of tissue distribution, expressed in endothelial cells.

It localises to the recycling endosome. Its subcellular location is the cytoplasm. It is found in the cell projection. The protein resides in the podosome. The protein localises to the cell junction. Its function is as follows. Required for proper architecture of actin filaments and for cell movements during embryogenesis. Plays a role in the radial actin fiber architecture in skin epithelial cells, thereby maintains cell geometry, size and cell interconnectivity within the skin. Plays an important role in coupling actin fibers to cell junctions in endothelial cells and is therefore required for correct endothelial cell morphology and maintenance of dorsal aorta lumen expansion during embryogenesis. May further play a role in the polarity, proliferation and migration of endothelial cells, and therefore participates in angiogenesis. May regulate the translocation of phosphorylated SRC to peripheral cell-matrix adhesion sites. The chain is Angiomotin-like 2b from Danio rerio (Zebrafish).